The primary structure comprises 57 residues: MAVQQRRSSKHRRDKRRSHDALTLQTLSVCKKCGKKKLSHRVCSCGMYGELRVKKAH.

Residues 1–20 are disordered; it reads MAVQQRRSSKHRRDKRRSHD. Residues 7–18 are compositionally biased toward basic residues; it reads RSSKHRRDKRRS.

This sequence belongs to the bacterial ribosomal protein bL32 family.

The chain is Large ribosomal subunit protein bL32 (rpmF) from Mycoplasma genitalium (strain ATCC 33530 / DSM 19775 / NCTC 10195 / G37) (Mycoplasmoides genitalium).